The primary structure comprises 461 residues: Bifunctional protein GlmU (461 aa).

The interval 1–229 is pyrophosphorylase; the sequence is MNKYVVILAA…FSESLGVNDR (229 aa). Residues 8-11, Lys22, Gln72, and 77-78 each bind UDP-N-acetyl-alpha-D-glucosamine; these read LAAG and GT. Residue Asp102 coordinates Mg(2+). Positions 139, 154, 169, and 227 each coordinate UDP-N-acetyl-alpha-D-glucosamine. Asn227 provides a ligand contact to Mg(2+). The linker stretch occupies residues 230–250; it reads IALAQATKIMQRRINEEHMKN. The tract at residues 251–461 is N-acetyltransferase; that stretch reads GVSFIDPDTA…LPLSKDKEWE (211 aa). Positions 332 and 350 each coordinate UDP-N-acetyl-alpha-D-glucosamine. The active-site Proton acceptor is His362. UDP-N-acetyl-alpha-D-glucosamine-binding residues include Tyr365 and Asn376. Acetyl-CoA is bound by residues 385–386, Ala422, and Arg439; that span reads NY.

This sequence in the N-terminal section; belongs to the N-acetylglucosamine-1-phosphate uridyltransferase family. It in the C-terminal section; belongs to the transferase hexapeptide repeat family. Homotrimer. It depends on Mg(2+) as a cofactor.

The protein localises to the cytoplasm. The catalysed reaction is alpha-D-glucosamine 1-phosphate + acetyl-CoA = N-acetyl-alpha-D-glucosamine 1-phosphate + CoA + H(+). The enzyme catalyses N-acetyl-alpha-D-glucosamine 1-phosphate + UTP + H(+) = UDP-N-acetyl-alpha-D-glucosamine + diphosphate. Its pathway is nucleotide-sugar biosynthesis; UDP-N-acetyl-alpha-D-glucosamine biosynthesis; N-acetyl-alpha-D-glucosamine 1-phosphate from alpha-D-glucosamine 6-phosphate (route II): step 2/2. It functions in the pathway nucleotide-sugar biosynthesis; UDP-N-acetyl-alpha-D-glucosamine biosynthesis; UDP-N-acetyl-alpha-D-glucosamine from N-acetyl-alpha-D-glucosamine 1-phosphate: step 1/1. It participates in bacterial outer membrane biogenesis; LPS lipid A biosynthesis. Its function is as follows. Catalyzes the last two sequential reactions in the de novo biosynthetic pathway for UDP-N-acetylglucosamine (UDP-GlcNAc). The C-terminal domain catalyzes the transfer of acetyl group from acetyl coenzyme A to glucosamine-1-phosphate (GlcN-1-P) to produce N-acetylglucosamine-1-phosphate (GlcNAc-1-P), which is converted into UDP-GlcNAc by the transfer of uridine 5-monophosphate (from uridine 5-triphosphate), a reaction catalyzed by the N-terminal domain. This is Bifunctional protein GlmU from Lactobacillus gasseri (strain ATCC 33323 / DSM 20243 / BCRC 14619 / CIP 102991 / JCM 1131 / KCTC 3163 / NCIMB 11718 / NCTC 13722 / AM63).